A 311-amino-acid polypeptide reads, in one-letter code: Ribosomal RNA small subunit methyltransferase H (311 aa).

Residues 33–35 (GGH), Asp53, Phe77, Asp98, and Gln105 each bind S-adenosyl-L-methionine.

It belongs to the methyltransferase superfamily. RsmH family.

Its subcellular location is the cytoplasm. It carries out the reaction cytidine(1402) in 16S rRNA + S-adenosyl-L-methionine = N(4)-methylcytidine(1402) in 16S rRNA + S-adenosyl-L-homocysteine + H(+). Its function is as follows. Specifically methylates the N4 position of cytidine in position 1402 (C1402) of 16S rRNA. This Thiobacillus denitrificans (strain ATCC 25259 / T1) protein is Ribosomal RNA small subunit methyltransferase H.